A 152-amino-acid polypeptide reads, in one-letter code: UPF0225 protein YchJ (152 aa).

This sequence belongs to the UPF0225 family.

This chain is UPF0225 protein YchJ, found in Escherichia coli O127:H6 (strain E2348/69 / EPEC).